A 406-amino-acid polypeptide reads, in one-letter code: Olfactomedin-like protein 3 (406 aa).

Residues 1-21 (MGPSAPLLLLFFLSWTGPLQG) form the signal peptide. The stretch at 25-101 (HLVEYMERRL…REVDYLETQN (77 aa)) forms a coiled coil. Residues 134–401 (DCSYTVAQVR…QIVYKLEMKK (268 aa)) form the Olfactomedin-like domain. Cysteines 135 and 328 form a disulfide. Residues Asn-177 and Asn-248 are each glycosylated (N-linked (GlcNAc...) asparagine).

The protein belongs to the OLFML3 family.

It localises to the secreted. Functionally, secreted scaffold protein that plays an essential role in dorsoventral patterning during early development. Stabilizes axial formation by restricting chordin (CHRD) activity on the dorsal side. Acts by facilitating the association between the tolloid proteases and their substrate chordin (CHRD), leading to enhance chordin (CHRD) degradation. May have matrix-related function involved in placental and embryonic development, or play a similar role in other physiological processes. The polypeptide is Olfactomedin-like protein 3 (Olfml3) (Mus musculus (Mouse)).